Reading from the N-terminus, the 400-residue chain is Tryptophan synthase beta chain (400 aa).

Lysine 92 is modified (N6-(pyridoxal phosphate)lysine).

The protein belongs to the TrpB family. As to quaternary structure, tetramer of two alpha and two beta chains. The cofactor is pyridoxal 5'-phosphate.

The catalysed reaction is (1S,2R)-1-C-(indol-3-yl)glycerol 3-phosphate + L-serine = D-glyceraldehyde 3-phosphate + L-tryptophan + H2O. It participates in amino-acid biosynthesis; L-tryptophan biosynthesis; L-tryptophan from chorismate: step 5/5. The beta subunit is responsible for the synthesis of L-tryptophan from indole and L-serine. The sequence is that of Tryptophan synthase beta chain from Neisseria meningitidis serogroup C (strain 053442).